The primary structure comprises 352 residues: UDP-N-acetylglucosamine--N-acetylmuramyl-(pentapeptide) pyrophosphoryl-undecaprenol N-acetylglucosamine transferase (352 aa).

UDP-N-acetyl-alpha-D-glucosamine contacts are provided by residues 11–13, Asn120, Arg161, Ser188, and Gln286; that span reads TGG.

This sequence belongs to the glycosyltransferase 28 family. MurG subfamily.

It localises to the cell inner membrane. It catalyses the reaction di-trans,octa-cis-undecaprenyl diphospho-N-acetyl-alpha-D-muramoyl-L-alanyl-D-glutamyl-meso-2,6-diaminopimeloyl-D-alanyl-D-alanine + UDP-N-acetyl-alpha-D-glucosamine = di-trans,octa-cis-undecaprenyl diphospho-[N-acetyl-alpha-D-glucosaminyl-(1-&gt;4)]-N-acetyl-alpha-D-muramoyl-L-alanyl-D-glutamyl-meso-2,6-diaminopimeloyl-D-alanyl-D-alanine + UDP + H(+). It functions in the pathway cell wall biogenesis; peptidoglycan biosynthesis. Cell wall formation. Catalyzes the transfer of a GlcNAc subunit on undecaprenyl-pyrophosphoryl-MurNAc-pentapeptide (lipid intermediate I) to form undecaprenyl-pyrophosphoryl-MurNAc-(pentapeptide)GlcNAc (lipid intermediate II). This chain is UDP-N-acetylglucosamine--N-acetylmuramyl-(pentapeptide) pyrophosphoryl-undecaprenol N-acetylglucosamine transferase, found in Prochlorococcus marinus (strain NATL2A).